The following is a 230-amino-acid chain: Oxygen-evolving enhancer protein 3-2, chloroplastic (230 aa).

Residues 1 to 49 constitute a chloroplast transit peptide; it reads MAQAVTSMAGLRGASQAVLEGSLQINGSNRLNISRVSVGSQRTGLVIRA. The transit peptide at 50–82 directs the protein to the thylakoid; it reads QQNVSVPESSRRSVIGLVAAGLAGGSFVKAVFA. Serine 125 bears the Phosphoserine mark. Threonine 195 carries the post-translational modification Phosphothreonine. Tyrosine 215 is subject to Phosphotyrosine. The residue at position 216 (serine 216) is a Phosphoserine. A Phosphothreonine modification is found at threonine 218.

The protein belongs to the PsbQ family.

The protein localises to the plastid. It localises to the chloroplast thylakoid membrane. Its function is as follows. Required for photosystem II assembly/stability and photoautotrophic growth under low light conditions. In Arabidopsis thaliana (Mouse-ear cress), this protein is Oxygen-evolving enhancer protein 3-2, chloroplastic (PSBQ2).